The primary structure comprises 93 residues: MSGLRVYSTSVTGSREIKSQQSEVTRILDGKRIQYQLVDISQDNALRDEMRALAGNPKATPPQIVNGDQYCGDYELFVEAVEQNTLQEFLKLA.

Position 2 is an N-acetylserine (Ser2). The 92-residue stretch at 2 to 93 folds into the Glutaredoxin domain; sequence SGLRVYSTSV…NTLQEFLKLA (92 aa). Thr9 carries an O-linked (GalNAc...) threonine glycan.

Belongs to the SH3BGR family. As to quaternary structure, homodimer. Interacts with MYO1C (via its IQ motifs); the interaction is dependent on calcium and takes place at membrane ruffles. Post-translationally, may be glycosylated.

The protein resides in the cytoplasm. The protein localises to the cytosol. It localises to the cell projection. It is found in the ruffle membrane. Its subcellular location is the nucleus. In terms of biological role, could act as a modulator of glutaredoxin biological activity. May play a role in cytoskeleton organization. In Bos taurus (Bovine), this protein is SH3 domain-binding glutamic acid-rich-like protein 3 (SH3BGRL3).